The primary structure comprises 790 residues: Pre-mRNA-splicing factor cwf3 (790 aa).

HAT repeat units follow at residues D12–G44, S45–A77, E89–K121, P123–D157, G159–L190, E193–Q228, T233–R266, G268–Q303, K331–D364, K368–N402, D404–R440, A457–S492, G494–E526, A528–K562, T567–K601, Y639–K673, and G675–R709. The interval L769 to N790 is disordered. Polar residues predominate over residues S775 to N790.

It belongs to the crooked-neck family. Belongs to the 40S cdc5-associated complex (or cwf complex), a spliceosome sub-complex reminiscent of a late-stage spliceosome composed of the U2, U5 and U6 snRNAs and at least brr2, cdc5, cwf2/prp3, cwf3/syf1, cwf4/syf3, cwf5/ecm2, spp42/cwf6, cwf7/spf27, cwf8, cwf9, cwf10, cwf11, cwf12, prp45/cwf13, cwf14, cwf15, cwf16, cwf17, cwf18, cwf19, cwf20, cwf21, cwf22, cwf23, cwf24, cwf25, cwf26, cyp7/cwf27, cwf28, cwf29/ist3, lea1, msl1, prp5/cwf1, prp10, prp12/sap130, prp17, prp22, sap61, sap62, sap114, sap145, slu7, smb1, smd1, smd3, smf1, smg1 and syf2.

It localises to the nucleus. Functionally, involved in pre-mRNA splicing and cell cycle progression. The sequence is that of Pre-mRNA-splicing factor cwf3 (cwf3) from Schizosaccharomyces pombe (strain 972 / ATCC 24843) (Fission yeast).